The sequence spans 133 residues: Cell division protein FtsL (133 aa).

Residues 1–45 (MAVEKVYQPYDEQVYNSIPKQQPQTKPEKKTVSRKVVVQLTKFEK) are Cytoplasmic-facing. Residues 46–65 (VLYITLITVIAMLSIYMLSL) form a helical membrane-spanning segment. Residues 66-133 (KMDAYDTRGK…VVRSNGEAKN (68 aa)) lie on the Extracellular side of the membrane.

Belongs to the FtsL family.

Its subcellular location is the cell membrane. Essential cell division protein. In Staphylococcus aureus (strain NCTC 8325 / PS 47), this protein is Cell division protein FtsL.